A 246-amino-acid chain; its full sequence is Octanoyltransferase (246 aa).

A BPL/LPL catalytic domain is found at 30–227 (GRIGNTLLLL…QFGRVFGHQV (198 aa)). Substrate-binding positions include 75-82 (RGGDVTYH), 155-157 (AIG), and 168-170 (GFA). The active-site Acyl-thioester intermediate is the Cys186.

The protein belongs to the LipB family.

Its subcellular location is the cytoplasm. The catalysed reaction is octanoyl-[ACP] + L-lysyl-[protein] = N(6)-octanoyl-L-lysyl-[protein] + holo-[ACP] + H(+). It participates in protein modification; protein lipoylation via endogenous pathway; protein N(6)-(lipoyl)lysine from octanoyl-[acyl-carrier-protein]: step 1/2. Catalyzes the transfer of endogenously produced octanoic acid from octanoyl-acyl-carrier-protein onto the lipoyl domains of lipoate-dependent enzymes. Lipoyl-ACP can also act as a substrate although octanoyl-ACP is likely to be the physiological substrate. This chain is Octanoyltransferase, found in Acidobacterium capsulatum (strain ATCC 51196 / DSM 11244 / BCRC 80197 / JCM 7670 / NBRC 15755 / NCIMB 13165 / 161).